The chain runs to 299 residues: Proline iminopeptidase (299 aa).

One can recognise an AB hydrolase-1 domain in the interval 29–279 (PLLLLHGGPG…SRHMAFIDEP (251 aa)). S105 (nucleophile) is an active-site residue. The active site involves D245. H272 functions as the Proton donor in the catalytic mechanism.

Belongs to the peptidase S33 family.

The protein localises to the cell envelope. The enzyme catalyses Release of N-terminal proline from a peptide.. Its function is as follows. Releases the N-terminal proline from various substrates. This chain is Proline iminopeptidase, found in Levilactobacillus brevis (strain ATCC 367 / BCRC 12310 / CIP 105137 / JCM 1170 / LMG 11437 / NCIMB 947 / NCTC 947) (Lactobacillus brevis).